The primary structure comprises 488 residues: Serine/threonine-protein kinase 32C (488 aa).

The tract at residues methionine 1 to arginine 56 is disordered. Phosphoserine is present on residues serine 10, serine 17, and serine 18. The span at alanine 24–proline 33 shows a compositional bias: low complexity. The 261-residue stretch at phenylalanine 94–leucine 354 folds into the Protein kinase domain. ATP is bound by residues isoleucine 100 to valine 108 and lysine 123. Aspartate 217 (proton acceptor) is an active-site residue. Positions histidine 397–asparagine 406 are enriched in basic residues. Disordered stretches follow at residues histidine 397–asparagine 420 and lysine 443–serine 488.

The protein belongs to the protein kinase superfamily. Ser/Thr protein kinase family. The cofactor is Mg(2+).

It carries out the reaction L-seryl-[protein] + ATP = O-phospho-L-seryl-[protein] + ADP + H(+). The enzyme catalyses L-threonyl-[protein] + ATP = O-phospho-L-threonyl-[protein] + ADP + H(+). This Mus musculus (Mouse) protein is Serine/threonine-protein kinase 32C.